A 245-amino-acid chain; its full sequence is Ribonuclease 3 (245 aa).

An RNase III domain is found at 19-148 (FRAFQQKLGI…FIGALYLDQG (130 aa)). Residue Glu61 participates in Mg(2+) binding. Asp65 is a catalytic residue. Mg(2+) is bound by residues Asp134 and Glu137. Residue Glu137 is part of the active site. Residues 174–243 (DYKSQLQELI…AAEALRKLKE (70 aa)) form the DRBM domain.

The protein belongs to the ribonuclease III family. Homodimer. Requires Mg(2+) as cofactor.

The protein resides in the cytoplasm. It catalyses the reaction Endonucleolytic cleavage to 5'-phosphomonoester.. Its function is as follows. Digests double-stranded RNA. Involved in the processing of primary rRNA transcript to yield the immediate precursors to the large and small rRNAs (23S and 16S). Processes some mRNAs, and tRNAs when they are encoded in the rRNA operon. Processes pre-crRNA and tracrRNA of type II CRISPR loci if present in the organism. This chain is Ribonuclease 3, found in Bacillus cytotoxicus (strain DSM 22905 / CIP 110041 / 391-98 / NVH 391-98).